Consider the following 684-residue polypeptide: Histamine oxidase (684 aa).

Residue 316-327 (YFDSGEYLVGRD) coordinates substrate. Aspartate 318 (proton acceptor) is an active-site residue. Cysteine 337 and cysteine 363 are joined by a disulfide. Residue 399 to 404 (VGNYDY) coordinates substrate. Tyrosine 402 serves as the catalytic Schiff-base intermediate with substrate; via topaquinone. At tyrosine 402 the chain carries 2',4',5'-topaquinone. Cu cation-binding residues include histidine 451 and histidine 453. Residues aspartate 460, glutamate 500, tyrosine 590, and aspartate 601 each contribute to the Ca(2+) site. Aspartate 460 is a binding site for Mn(2+). Aspartate 601 is a Mn(2+) binding site. Position 612 (histidine 612) interacts with Cu cation. A disordered region spans residues 647-684 (SSAAGHCGTGSEREHAAPGGTAVGHSGPDTGGQGHCGH). Over residues 675–684 (DTGGQGHCGH) the composition is skewed to gly residues.

Belongs to the copper/topaquinone oxidase family. As to quaternary structure, homodimer. Requires Cu cation as cofactor. The cofactor is Zn(2+). Ca(2+) is required as a cofactor. It depends on L-topaquinone as a cofactor. Mn(2+) serves as cofactor. Post-translationally, topaquinone (TPQ) is generated by copper-dependent autoxidation of a specific tyrosyl residue.

The protein resides in the cytoplasm. It carries out the reaction a primary methyl amine + O2 + H2O = an aldehyde + H2O2 + NH4(+). It catalyses the reaction histamine + O2 + H2O = imidazole-4-acetaldehyde + H2O2 + NH4(+). Its function is as follows. Oxidizes histamine. Other amines including phenethylamine, tyramine, tryptamine, putrescine, and benzylamine also serve as substrate. This Arthrobacter globiformis protein is Histamine oxidase.